Here is a 402-residue protein sequence, read N- to C-terminus: Imidazolonepropionase (402 aa).

The Fe(3+) site is built by H66 and H68. Residues H66 and H68 each coordinate Zn(2+). 3 residues coordinate 4-imidazolone-5-propanoate: R75, Y138, and H171. An N-formimidoyl-L-glutamate-binding site is contributed by Y138. A Fe(3+)-binding site is contributed by H236. H236 serves as a coordination point for Zn(2+). Q239 serves as a coordination point for 4-imidazolone-5-propanoate. D311 is a Fe(3+) binding site. Zn(2+) is bound at residue D311. N313 and G315 together coordinate N-formimidoyl-L-glutamate. T316 contributes to the 4-imidazolone-5-propanoate binding site.

This sequence belongs to the metallo-dependent hydrolases superfamily. HutI family. It depends on Zn(2+) as a cofactor. Requires Fe(3+) as cofactor.

It localises to the cytoplasm. The catalysed reaction is 4-imidazolone-5-propanoate + H2O = N-formimidoyl-L-glutamate. The protein operates within amino-acid degradation; L-histidine degradation into L-glutamate; N-formimidoyl-L-glutamate from L-histidine: step 3/3. Its function is as follows. Catalyzes the hydrolytic cleavage of the carbon-nitrogen bond in imidazolone-5-propanoate to yield N-formimidoyl-L-glutamate. It is the third step in the universal histidine degradation pathway. This Pseudomonas paraeruginosa (strain DSM 24068 / PA7) (Pseudomonas aeruginosa (strain PA7)) protein is Imidazolonepropionase.